The primary structure comprises 1347 residues: MTRAEVEPGAQAKAENKPGDENANAAEVEPEAPLVVRPKVRTQIMTGARPKVKPKGTPGARPKGETSTPGGAYAKCKPKAIPIARSKHDAQVWAPNKFRGESMSKMGKQCQISAADPPLLSNDSGMVAQAKCLPVDRELANMDTESIPKKANSPAGFQPSYGSEEGTNMGSWYRARPVPKGEAYENSDFKWADKPSGSPSFWNRDEASTRFRPRKSMKANNRFRHMAKQEANTMPRHKNKQEFYNISSSDSEDESGKTPWFWPKDKTKVWSKPKEEPNSRSWFRSKKEVRVESTSGSECENPTKSLFWSGEEAKSRSKPRARKGVNMRARQQAKREACSDAMSGAIDTNKKESWFLPEEKANVFSKSKTKKEPRTRAVPKEEVKTKARASTKQEARPEEEVLVGAWFWDTQESTMADRISIKTTFVEEEPIVGDWFWSEEEASVDSETCHTSRPRAKEEQVSSFCLGSGKKSSMESGPKATSKSMPVAKEDEVVIGSWFWADDEEINLQADDESIFGSWFWGTGENSLRSVGVNCEKMPKAGEKEVTDSWFWAGDVNTEAEVEEQARSASTKATIFVPWFWSEKQPNMDLGSEPCSDIMAGAEEEPIIGPWFWAKVDNSVEAEVNSKSSLEDEEEPIRSPWFGAREQTDMKYAAGIRYKPMAEAEDANKKSCVWAKEPCLYPTNRECLKSTLGEKEDTVDPWLWSNNYPRTKTITGSWLWAAEEGNIDDETGEKIKLPTLEDNAFNSWFWKENEESIVEAPKREEFRPEAEEEDIIGSWFWAGDEDRFEPAAKINEENKIASEDEDTVGSWFWGNEEASLEAVRRGTFESAPGIKEEKVTGSWFWTDKAKVGAGSQTVETGSETEEEAIFESLIWAAKKDSIQAGVKRVSKPKDDGNIAVGSWLWSSDKATKEAKTLIVSEASPENGKESVVKFGSRAKDEVINKTGSGDNCKHSTEAETIVGAWFWEGDEASFESNPVPVCKAVCEPESSAEHEPDPSRRPQSWDEVTVQFKAGPWGKAGFPPMNPFRFPKEAASLFAEMFGGKPKLVEVGPEREPEPQFPFQYDPSYRSVREIREHLKARESAQPENWSCNCIQCELRIGSEEFEELLLLMDRNRDPFIHEISKIAMGMRGASQFTRDFIRNSGVVSLIEALLNYPSSRVRTRFLENMVRMAPPYPDLNMIETYVCQICEDTFDYDLDSPDQLSGLTMITHLTATSDYHKVVVNYLAGFFYLLNSGNTKTRFHVLKLLLNLSENLVMTKRLLVTDSVSEFMDLINREESDENIQIVLAIFETISKHIQKEALFSDDDDDDEEEDAVNLEPFISAFREAEKIAKELKRKPGNQKAP.

Disordered stretches follow at residues 1–75 (MTRA…AYAK), 145–174 (ESIP…SWYR), and 188–281 (DFKW…NSRS). Residues 21-33 (ENANAAEVEPEAP) show a composition bias toward low complexity. A compositionally biased stretch (basic residues) spans 211 to 226 (FRPRKSMKANNRFRHM). The segment covering 263–278 (PKDKTKVWSKPKEEPN) has biased composition (basic and acidic residues). Ser-295 is modified (phosphoserine). Disordered stretches follow at residues 310 to 344 (GEEA…AMSG), 364 to 396 (FSKS…QEAR), and 460 to 485 (QVSS…SKSM). Residues 316 to 325 (RSKPRARKGV) are compositionally biased toward basic residues. Basic and acidic residues predominate over residues 370 to 396 (KKEPRTRAVPKEEVKTKARASTKQEAR). The segment covering 461–484 (VSSFCLGSGKKSSMESGPKATSKS) has biased composition (polar residues). Phosphoserine is present on residues Ser-619 and Ser-626. A Phosphothreonine modification is found at Thr-860. Ser-862 is subject to Phosphoserine.

This sequence belongs to the GPRASP family. As to quaternary structure, interacts with cytoplasmic tails of a variety of G-protein coupled receptors such as delta opioid receptor/OPRD1, beta-2 adrenergic receptor/ADRB2 and D4 dopamine receptor/DRD4 as well as D2 dopamine receptor/DRD2. Interacts with PER1. Interacts with BECN2; the interaction is direct. As to expression, expressed in the brain, with higher expression in the hippocampus, hypothalamus and olfactory bulb.

The protein localises to the cytoplasm. In terms of biological role, modulates lysosomal sorting and functional down-regulation of a variety of G-protein coupled receptors. Targets receptors for degradation in lysosomes via its interaction with BECN2. This chain is G-protein coupled receptor-associated sorting protein 1 (Gprasp1), found in Mus musculus (Mouse).